Reading from the N-terminus, the 174-residue chain is Mitochondrial holo-[acyl-carrier-protein] synthase (174 aa).

It belongs to the P-Pant transferase superfamily. AcpS family.

The protein localises to the mitochondrion. The catalysed reaction is apo-[ACP] + CoA = holo-[ACP] + adenosine 3',5'-bisphosphate + H(+). Its function is as follows. Transfers the 4'-phosphopantetheine moiety from coenzyme A to a Ser of mitochondrial acyl-carrier-protein. The polypeptide is Mitochondrial holo-[acyl-carrier-protein] synthase (PPT2) (Eremothecium gossypii (strain ATCC 10895 / CBS 109.51 / FGSC 9923 / NRRL Y-1056) (Yeast)).